The sequence spans 254 residues: Type III pantothenate kinase (254 aa).

6 to 13 is an ATP binding site; it reads DVGNTNTV. Residues Y100 and 107-110 each bind substrate; that span reads GADR. D109 acts as the Proton acceptor in catalysis. Position 129 (D129) interacts with K(+). T132 provides a ligand contact to ATP. Substrate is bound at residue T184.

Belongs to the type III pantothenate kinase family. As to quaternary structure, homodimer. Requires NH4(+) as cofactor. The cofactor is K(+).

It is found in the cytoplasm. The enzyme catalyses (R)-pantothenate + ATP = (R)-4'-phosphopantothenate + ADP + H(+). Its pathway is cofactor biosynthesis; coenzyme A biosynthesis; CoA from (R)-pantothenate: step 1/5. In terms of biological role, catalyzes the phosphorylation of pantothenate (Pan), the first step in CoA biosynthesis. This is Type III pantothenate kinase from Anaeromyxobacter sp. (strain Fw109-5).